Reading from the N-terminus, the 383-residue chain is MAFVHIRCLCFILLCTITGYSLEIKVNPPQDFEILDPGLLGYLYLQWKPPVVIEKFKGCTLEYELKYRNVDSDSWKTIITRNLIYKDGFDLNKGIEGKIRTHLSEHCTNGSEVQSPWIEASYGISDEGSLETKIQDMKCIYYNWQYLVCSWKPGKTVYSDTNYTMFFWYEGLDHALQCADYLQHDEKNVGCKLSNLDSSDYKDFFICVNGSSKLEPIRSSYTVFQLQNIVKPLPPEFLHISVENSIDIRMKWSTPGGPIPPRCYTYEIVIREDDISWESATDKNDMKLKRRANESEDLCFFVRCKVNIYCADDGIWSEWSEEECWEGYTGPDSKIIFIVPVCLFFIFLLLLLCLIVEKEEPEPTLSLHVDLNKEVCAYEDTLC.

The first 21 residues, 1-21, serve as a signal peptide directing secretion; that stretch reads MAFVHIRCLCFILLCTITGYS. Residues 22–334 lie on the Extracellular side of the membrane; that stretch reads LEIKVNPPQD…WEGYTGPDSK (313 aa). Fibronectin type-III domains follow at residues 28–128, 131–219, and 234–332; these read PPQD…SDEG, ETKI…PIRS, and PPEF…TGPD. A disulfide bond links Cys-59 and Cys-107. Residue Asn-109 is glycosylated (N-linked (GlcNAc...) asparagine). A disulfide bond links Cys-139 and Cys-149. Asn-162 carries N-linked (GlcNAc...) asparagine glycosylation. Residues Cys-178 and Cys-191 are joined by a disulfide bond. N-linked (GlcNAc...) asparagine glycosylation is found at Asn-209 and Asn-293. An intrachain disulfide couples Cys-263 to Cys-310. Positions 316-320 match the WSXWS motif motif; it reads WSEWS. The chain crosses the membrane as a helical span at residues 335–355; the sequence is IIFIVPVCLFFIFLLLLLCLI. Residues 356–383 lie on the Cytoplasmic side of the membrane; the sequence is VEKEEPEPTLSLHVDLNKEVCAYEDTLC.

It belongs to the type I cytokine receptor family. Type 5 subfamily. In terms of assembly, interacts with IL4RA. Interacts with high affinity to interleukin-13 (IL13), but not to interleukin-4 (IL4). In terms of processing, cleaved by MMP8 leading to a soluble form that is also able to interact with IL13.

It localises to the cell membrane. Its subcellular location is the secreted. In terms of biological role, cell surface receptor that plays a role in the regulation of IL-13-mediated responses. Functions as a decoy receptor that inhibits IL-13- and IL-4-mediated signal transduction via the JAK-STAT pathway and thereby modulates immune responses and inflammation. Serves as a functional signaling receptor for IL-13 in an alternative pathway involving AP-1 ultimately leading to the production of TGFB1. The polypeptide is Interleukin-13 receptor subunit alpha-2 (Il13ra2) (Mus musculus (Mouse)).